Reading from the N-terminus, the 185-residue chain is MIVLGIDPGSRRCGYGVVAREGARLTVVESGVLVPGDLPMAQRLGRILDGLDALIARARPLEASVESVFSGASPRSALVLGQARGVALAAAARAGLPVFEYAPSEVKLAFTGNGRAGKDQMLRTARMLLGAAPGLSDEADALAIAVCHLARRAFAVPAAGAGRAAAARAAAARLRPSRRDHRGTP.

Active-site residues include Asp7, Glu66, and Asp137. The Mg(2+) site is built by Asp7, Glu66, and Asp137.

This sequence belongs to the RuvC family. In terms of assembly, homodimer which binds Holliday junction (HJ) DNA. The HJ becomes 2-fold symmetrical on binding to RuvC with unstacked arms; it has a different conformation from HJ DNA in complex with RuvA. In the full resolvosome a probable DNA-RuvA(4)-RuvB(12)-RuvC(2) complex forms which resolves the HJ. Mg(2+) is required as a cofactor.

It is found in the cytoplasm. The enzyme catalyses Endonucleolytic cleavage at a junction such as a reciprocal single-stranded crossover between two homologous DNA duplexes (Holliday junction).. The RuvA-RuvB-RuvC complex processes Holliday junction (HJ) DNA during genetic recombination and DNA repair. Endonuclease that resolves HJ intermediates. Cleaves cruciform DNA by making single-stranded nicks across the HJ at symmetrical positions within the homologous arms, yielding a 5'-phosphate and a 3'-hydroxyl group; requires a central core of homology in the junction. The consensus cleavage sequence is 5'-(A/T)TT(C/G)-3'. Cleavage occurs on the 3'-side of the TT dinucleotide at the point of strand exchange. HJ branch migration catalyzed by RuvA-RuvB allows RuvC to scan DNA until it finds its consensus sequence, where it cleaves and resolves the cruciform DNA. This is Crossover junction endodeoxyribonuclease RuvC from Anaeromyxobacter dehalogenans (strain 2CP-1 / ATCC BAA-258).